The primary structure comprises 271 residues: Glutamate racemase (271 aa).

Residues 9–10 and 41–42 contribute to the substrate site; these read DS and YG. The active-site Proton donor/acceptor is Cys72. 73–74 serves as a coordination point for substrate; it reads NT. Cys183 functions as the Proton donor/acceptor in the catalytic mechanism. A substrate-binding site is contributed by 184 to 185; sequence TH.

It belongs to the aspartate/glutamate racemases family.

The catalysed reaction is L-glutamate = D-glutamate. It participates in cell wall biogenesis; peptidoglycan biosynthesis. Its function is as follows. Provides the (R)-glutamate required for cell wall biosynthesis. The chain is Glutamate racemase from Exiguobacterium sibiricum (strain DSM 17290 / CCUG 55495 / CIP 109462 / JCM 13490 / 255-15).